The primary structure comprises 395 residues: Phosphatidylinositol 4-phosphate 5-kinase-like protein 1 (395 aa).

The tract at residues 1 to 25 (MATPSLRSHEIPAHSQEAGNKSISS) is disordered. The PIPK domain occupies 37-394 (ARQSRVGLFE…RLCRWAEVHT (358 aa)).

Interacts with type I phosphatidylinositol 4-phosphate 5-kinases, including PIP5K1A and PIP5K1B. Highly expressed in brain and testis, relatively to heart, spleen, lung, liver, skeletal muscle and kidney.

Its subcellular location is the cytoplasm. The protein resides in the membrane. May act as a scaffold to localize and regulate type I phosphatidylinositol 4-phosphate 5-kinases to specific compartments within the cell, where they generate PI(4,5)P2 for actin nucleation, signaling and scaffold protein recruitment and conversion to PI(3,4,5)P3. The chain is Phosphatidylinositol 4-phosphate 5-kinase-like protein 1 (Pip5kl1) from Mus musculus (Mouse).